Consider the following 177-residue polypeptide: 3-hydroxydecanoyl-[acyl-carrier-protein] dehydratase (177 aa).

Residue histidine 71 is part of the active site.

It belongs to the thioester dehydratase family. FabA subfamily. In terms of assembly, homodimer.

It is found in the cytoplasm. The enzyme catalyses a (3R)-hydroxyacyl-[ACP] = a (2E)-enoyl-[ACP] + H2O. It carries out the reaction (3R)-hydroxydecanoyl-[ACP] = (2E)-decenoyl-[ACP] + H2O. It catalyses the reaction (2E)-decenoyl-[ACP] = (3Z)-decenoyl-[ACP]. The protein operates within lipid metabolism; fatty acid biosynthesis. Functionally, necessary for the introduction of cis unsaturation into fatty acids. Catalyzes the dehydration of (3R)-3-hydroxydecanoyl-ACP to E-(2)-decenoyl-ACP and then its isomerization to Z-(3)-decenoyl-ACP. Can catalyze the dehydratase reaction for beta-hydroxyacyl-ACPs with saturated chain lengths up to 16:0, being most active on intermediate chain length. This Wigglesworthia glossinidia brevipalpis protein is 3-hydroxydecanoyl-[acyl-carrier-protein] dehydratase.